Here is a 277-residue protein sequence, read N- to C-terminus: Large ribosomal subunit protein uL2 (277 aa).

Positions 222 to 277 are disordered; the sequence is GVAMNPVDHPHGGGEGRTSGGRHPVTPWGKPTKGKKTRSNKATDKFIMRSRHQRKK.

This sequence belongs to the universal ribosomal protein uL2 family. In terms of assembly, part of the 50S ribosomal subunit. Forms a bridge to the 30S subunit in the 70S ribosome.

Its function is as follows. One of the primary rRNA binding proteins. Required for association of the 30S and 50S subunits to form the 70S ribosome, for tRNA binding and peptide bond formation. It has been suggested to have peptidyltransferase activity; this is somewhat controversial. Makes several contacts with the 16S rRNA in the 70S ribosome. The polypeptide is Large ribosomal subunit protein uL2 (Brucella ovis (strain ATCC 25840 / 63/290 / NCTC 10512)).